The sequence spans 608 residues: MSGPLDRFTSPCFSNNGEKREKKSDFEVSEDEKKTRIGGILKKKSSKSKFRHSLKRRGSRSIDRTLSLTFEDIHDAEELRYVSEFRQSLISDHLLPPNLDDYHIMLRFLFARKFDLGKAKLMWTNMIQWRRDFGTDTILEDFEFPELDEVLRYYPQGYHGVDKEGRPVYIERLGKVDASKLMQVTTLERYLRYHVKEFEKTITVKFPACCIAAKRHIDSSTTILDVQGLGLKNFTKTARDLIIQLQKIDSDNYPETLHRMFIINAGSGFKLLWGTVKSFLDPKTVSKIHVLGNKYQNKLLEMIDASQLPDFFGGTCTCADQGGCMRSDKGPWKDSEILKMGRSGGTFCRHAGAFLSSDSQISSSDKPTYSLKVSDTSTAKSGSELEEMASPKTNTNNHVPKLTPVSEYANGNISPTVLSEYEECVPMVDKVVDVAWQLQEMPNASEGPQYTSSLGKIGSVRHIWSWLTAFFISFFTLLASLALPQTKEHSQLHSSSVRAELCDERIARESRPPSPPRSTITERVIISSVLSRLGDLEKQIENLHSRKSEMPHEKEELLNAAVYRVDALEAELITTKKALHEALIRQEELLGYIDRQKEAKCRRKKFCW.

The disordered stretch occupies residues 1–33 (MSGPLDRFTSPCFSNNGEKREKKSDFEVSEDEK). Basic and acidic residues predominate over residues 17-33 (GEKREKKSDFEVSEDEK). A CRAL-TRIO domain is found at 146-320 (ELDEVLRYYP…FFGGTCTCAD (175 aa)). The disordered stretch occupies residues 358-403 (DSQISSSDKPTYSLKVSDTSTAKSGSELEEMASPKTNTNNHVPKLT). A compositionally biased stretch (polar residues) spans 371-381 (LKVSDTSTAKS). A coiled-coil region spans residues 526-572 (ISSVLSRLGDLEKQIENLHSRKSEMPHEKEELLNAAVYRVDALEAEL).

The protein belongs to the SFH family.

It is found in the golgi apparatus membrane. Its subcellular location is the cell membrane. Its function is as follows. Required for transport of secretory proteins from the Golgi complex. Catalyzes the transfer of phosphatidylinositol and phosphatidylcholine between membranes in vitro. The chain is Phosphatidylinositol/phosphatidylcholine transfer protein SFH4 (SFH4) from Arabidopsis thaliana (Mouse-ear cress).